Reading from the N-terminus, the 593-residue chain is Cryptochrome-2 (593 aa).

The Photolyase/cryptochrome alpha/beta domain maps to 22–151 (ASSVHWFRKG…EVVTENSHTL (130 aa)). K30 participates in a covalent cross-link: Glycyl lysine isopeptide (Lys-Gly) (interchain with G-Cter in ubiquitin). At S90 the chain carries Phosphoserine. Residues K126 and K242 each participate in a glycyl lysine isopeptide (Lys-Gly) (interchain with G-Cter in ubiquitin) cross-link. Residue S266 is modified to Phosphoserine; by MAPK. S271 serves as a coordination point for FAD. Position 299 is a phosphoserine (S299). Residue Q308 coordinates FAD. A Glycyl lysine isopeptide (Lys-Gly) (interchain with G-Cter in ubiquitin) cross-link involves residue K348. FAD is bound by residues H374 and 406–408 (DAD). The tract at residues 390-489 (WVSWESGVRV…IIGVDYPRPI (100 aa)) is required for inhibition of CLOCK-BMAL1-mediated transcription. Glycyl lysine isopeptide (Lys-Gly) (interchain with G-Cter in ubiquitin) cross-links involve residues K475 and K504. Residues 532-593 (PVAEPSSSQA…PTPELPSKDA (62 aa)) are disordered. Over residues 537 to 548 (SSSQAGSMSSAG) the composition is skewed to low complexity. S554 is subject to Phosphoserine; by GSK3-beta. S558 carries the post-translational modification Phosphoserine; by DYRK1A and MAPK.

It belongs to the DNA photolyase class-1 family. Component of the circadian core oscillator, which includes the CRY proteins, CLOCK or NPAS2, BMAL1 or BMAL2, CSNK1D and/or CSNK1E, TIMELESS, and the PER proteins. Interacts with TIMELESS. Interacts directly with PER1, PER2 and PER3; interaction with PER2 inhibits its ubiquitination and vice versa. Interacts with CLOCK-BMAL1. Interacts with CLOCK. Interacts with BMAL1. Interacts with NFIL3. Interacts with FBXL3. Interacts with FBXL21. FBXL3, PER2 and the cofactor FAD compete for overlapping binding sites. FBXL3 cannot bind CRY2 that interacts already with PER2 or that contains bound FAD. Interacts with PPP5C (via TPR repeats); the interaction down-regulates the PPP5C phosphatase activity on CSNK1E. Interacts with nuclear receptors AR and NR3C1/GR; the interaction is ligand dependent. Interacts with PRKDC and CIART. Interacts with ISCA1 (in vitro). Interacts with DDB1, USP7 and TARDBP. Interacts with HNF4A. Interacts with PPARA. Interacts with PPARD (via domain NR LBD) and NR1I2 (via domain NR LBD) in a ligand-dependent manner. Interacts with PPARG, NR1I3 and VDR in a ligand-dependent manner. Requires FAD as cofactor. The cofactor is (6R)-5,10-methylene-5,6,7,8-tetrahydrofolate. In terms of processing, phosphorylation on Ser-266 by MAPK is important for the inhibition of CLOCK-BMAL1-mediated transcriptional activity. Phosphorylation by CSKNE requires interaction with PER1 or PER2. Phosphorylated in a circadian manner at Ser-554 and Ser-558 in the suprachiasmatic nucleus (SCN) and liver. Phosphorylation at Ser-558 by DYRK1A promotes subsequent phosphorylation at Ser-554 by GSK3-beta: the two-step phosphorylation at the neighboring Ser residues leads to its proteasomal degradation. Ubiquitinated by the SCF(FBXL3) and SCF(FBXL21) complexes, regulating the balance between degradation and stabilization. The SCF(FBXL3) complex is mainly nuclear and mediates ubiquitination and subsequent degradation of CRY2. In contrast, cytoplasmic SCF(FBXL21) complex-mediated ubiquitination leads to stabilize CRY2 and counteract the activity of the SCF(FBXL3) complex. The SCF(FBXL3) and SCF(FBXL21) complexes probably mediate ubiquitination at different Lys residues. The SCF(FBXL3) complex recognizes and binds CRY2 phosphorylated at Ser-554 and Ser-558. Ubiquitination may be inhibited by PER2. Deubiquitinated by USP7. Expressed in all tissues examined including fetal brain, fibroblasts, heart, brain, placenta, lung, liver, skeletal muscle, kidney, pancreas, spleen, thymus, prostate, testis, ovary, small intestine, colon and leukocytes. Highest levels in heart and skeletal muscle.

The protein resides in the cytoplasm. The protein localises to the nucleus. Its activity is regulated as follows. KL001 (N-[3-(9H-carbazol-9-yl)-2-hydroxypropyl]-N-(2-furanylmethyl)-methanesulfonamide) binds to CRY1 and stabilizes it by inhibiting FBXL3- and ubiquitin-dependent degradation of CRY1 resulting in lengthening of the circadian periods. Transcriptional repressor which forms a core component of the circadian clock. The circadian clock, an internal time-keeping system, regulates various physiological processes through the generation of approximately 24 hour circadian rhythms in gene expression, which are translated into rhythms in metabolism and behavior. It is derived from the Latin roots 'circa' (about) and 'diem' (day) and acts as an important regulator of a wide array of physiological functions including metabolism, sleep, body temperature, blood pressure, endocrine, immune, cardiovascular, and renal function. Consists of two major components: the central clock, residing in the suprachiasmatic nucleus (SCN) of the brain, and the peripheral clocks that are present in nearly every tissue and organ system. Both the central and peripheral clocks can be reset by environmental cues, also known as Zeitgebers (German for 'timegivers'). The predominant Zeitgeber for the central clock is light, which is sensed by retina and signals directly to the SCN. The central clock entrains the peripheral clocks through neuronal and hormonal signals, body temperature and feeding-related cues, aligning all clocks with the external light/dark cycle. Circadian rhythms allow an organism to achieve temporal homeostasis with its environment at the molecular level by regulating gene expression to create a peak of protein expression once every 24 hours to control when a particular physiological process is most active with respect to the solar day. Transcription and translation of core clock components (CLOCK, NPAS2, BMAL1, BMAL2, PER1, PER2, PER3, CRY1 and CRY2) plays a critical role in rhythm generation, whereas delays imposed by post-translational modifications (PTMs) are important for determining the period (tau) of the rhythms (tau refers to the period of a rhythm and is the length, in time, of one complete cycle). A diurnal rhythm is synchronized with the day/night cycle, while the ultradian and infradian rhythms have a period shorter and longer than 24 hours, respectively. Disruptions in the circadian rhythms contribute to the pathology of cardiovascular diseases, cancer, metabolic syndromes and aging. A transcription/translation feedback loop (TTFL) forms the core of the molecular circadian clock mechanism. Transcription factors, CLOCK or NPAS2 and BMAL1 or BMAL2, form the positive limb of the feedback loop, act in the form of a heterodimer and activate the transcription of core clock genes and clock-controlled genes (involved in key metabolic processes), harboring E-box elements (5'-CACGTG-3') within their promoters. The core clock genes: PER1/2/3 and CRY1/2 which are transcriptional repressors form the negative limb of the feedback loop and interact with the CLOCK|NPAS2-BMAL1|BMAL2 heterodimer inhibiting its activity and thereby negatively regulating their own expression. This heterodimer also activates nuclear receptors NR1D1/2 and RORA/B/G, which form a second feedback loop and which activate and repress BMAL1 transcription, respectively. CRY1 and CRY2 have redundant functions but also differential and selective contributions at least in defining the pace of the SCN circadian clock and its circadian transcriptional outputs. Less potent transcriptional repressor in cerebellum and liver than CRY1, though less effective in lengthening the period of the SCN oscillator. Seems to play a critical role in tuning SCN circadian period by opposing the action of CRY1. With CRY1, dispensable for circadian rhythm generation but necessary for the development of intercellular networks for rhythm synchrony. May mediate circadian regulation of cAMP signaling and gluconeogenesis by blocking glucagon-mediated increases in intracellular cAMP concentrations and in CREB1 phosphorylation. Besides its role in the maintenance of the circadian clock, is also involved in the regulation of other processes. Plays a key role in glucose and lipid metabolism modulation, in part, through the transcriptional regulation of genes involved in these pathways, such as LEP or ACSL4. Represses glucocorticoid receptor NR3C1/GR-induced transcriptional activity by binding to glucocorticoid response elements (GREs). Represses the CLOCK-BMAL1 induced transcription of BHLHE40/DEC1. Represses the CLOCK-BMAL1 induced transcription of NAMPT. Represses PPARD and its target genes in the skeletal muscle and limits exercise capacity. Represses the transcriptional activity of NR1I2. The polypeptide is Cryptochrome-2 (CRY2) (Homo sapiens (Human)).